The primary structure comprises 77 residues: Putative sulfur carrier protein YedF (77 aa).

C17 acts as the Cysteine persulfide intermediate in catalysis.

This sequence belongs to the sulfur carrier protein TusA family.

The protein is Putative sulfur carrier protein YedF (yedF) of Escherichia coli O157:H7.